The primary structure comprises 490 residues: Phosphoglucosamine mutase (490 aa).

The active-site Phosphoserine intermediate is S139. The Mg(2+) site is built by S139, D279, D281, and D283. At S139 the chain carries Phosphoserine.

This sequence belongs to the phosphohexose mutase family. Mg(2+) is required as a cofactor. Activated by phosphorylation.

It catalyses the reaction alpha-D-glucosamine 1-phosphate = D-glucosamine 6-phosphate. Catalyzes the conversion of glucosamine-6-phosphate to glucosamine-1-phosphate. The protein is Phosphoglucosamine mutase of Nostoc punctiforme (strain ATCC 29133 / PCC 73102).